The following is a 526-amino-acid chain: Cytochrome P450 monooxygenase ucsK (526 aa).

Residues 7-27 form a helical membrane-spanning segment; the sequence is PVLAAATAVSFGFYLAGLFVY. Asn403 carries an N-linked (GlcNAc...) asparagine glycan. Heme is bound at residue Cys467.

This sequence belongs to the cytochrome P450 family. Requires heme as cofactor.

It is found in the membrane. Its pathway is mycotoxin biosynthesis. Functionally, cytochrome P450 monooxygenase; part of the gene cluster that mediates the biosynthesis of UCS1025A, a member of the pyrrolizidinone family that acts as a strong telomerase inhibitor and displays potent antibacterial and antitumor properties. These compounds share a hemiaminal-containing pyrrolizidinone core fused with a gamma-lactone, giving a furopyrrolizidine that is connected to a decalin fragment. The polyketide synthase module (PKS) of the PKS-NRPS ucsA is responsible for the synthesis of the polyketide backbone via the condensation of an acetyl-CoA starter unit with 6 malonyl-CoA units. The downstream nonribosomal peptide synthetase (NRPS) module then amidates the carboxyl end of the polyketide with a 2S,3S-methylproline derived from L-isoleucine by the 2-oxoglutarate-dependent dioxygenase ucsF which converts L-isoleucine to (4S,5S)-4-methylpyrroline-5-carboxylate that is further converted to 2S,3S-methylproline by the pyrroline-5-carboxylate reductase ucsG. Reductive release of the completed aminoacyl polyketide from the assembly line can form the 3-pyrrolin-2-one structure via an intramolecular Knoevenagel reaction. Because ucsA lacks a designated enoylreductase (ER) domain, the required activity is provided the enoyl reductase ucsL. This keto acyclic precursor is the substrate of the Diels-Alderase ucsH, that catalyzes the Diels-Alder cycloaddition. Oxidation of the 3S-methyl group to a carboxylate by the cytochrome P450 monooxygenase ucsK allows an oxa-Michael cyclization that might involve the reductase/dehydrogenase ucsI and which furnishes the furopyrrolizidine. The oxidase ucsJ likely plays a critical role in stereoselective reduction of the C5-C6 double bond to afford the required R-configured carboxylate group. Further enolization and oxidation at C5 by an unidentified enzyme affords the last intermediate that can undergo oxa-Michael cyclization to yield UCS1025A. The chain is Cytochrome P450 monooxygenase ucsK from Acremonium sp.